Consider the following 1325-residue polypeptide: Protein suppressor of sable (1325 aa).

2 disordered regions span residues 1-36 and 74-326; these read MSVA…SKIQ and VCLQ…GGSN. A compositionally biased stretch (acidic residues) spans 9 to 30; it reads PLIDLEEDLEDGEIDDDEEDEQ. Positions 119–131 are enriched in polar residues; sequence RSSNQDTSDQSLE. The interval 138–327 is highly charged; that stretch reads ATANPLLQST…GQEKMGGSNR (190 aa). Basic residues predominate over residues 149-158; the sequence is SSRRRKRKKE. Positions 149-179 form a coiled coil; sequence SSRRRKRKKEREREQKKDKEQQNRSRRDEND. Positions 159-178 are enriched in basic and acidic residues; that stretch reads REREQKKDKEQQNRSRRDEN. The segment covering 236 to 246 has biased composition (gly residues); sequence AGLGAGGGGGY. Positions 276-296 form a coiled coil; that stretch reads NEKEHQRGVNNRKRRDRDRLE. C3H1-type zinc fingers lie at residues 330–357 and 358–381; these read PRKL…HKEF and PCKY…HGEP. Residues 444–478 are a coiled coil; that stretch reads KRQDHQMQQQQQQLQHQQLQQQQEQQQTQQQAAAD. A compositionally biased stretch (basic and acidic residues) spans 499-509; sequence KRKSRWTEKMG. 8 disordered regions span residues 499-535, 588-622, 639-695, 710-745, 780-835, 979-1058, 1143-1170, and 1295-1325; these read KRKS…LPPH, KAED…KSNG, FSGN…PSVF, SARQ…IGGG, AHSG…ALPP, DLET…GGSK, EPNG…GGGV, and RGGH…NRNI. The residue at position 524 (serine 524) is a Phosphoserine. A compositionally biased stretch (polar residues) spans 594 to 606; it reads PQTQAELESSTPP. Residue threonine 604 is modified to Phosphothreonine. Positions 644-668 are enriched in acidic residues; the sequence is PLDDDRDDDEQLIIDDGNDSTAEED. A Phosphoserine modification is found at serine 663. A Phosphothreonine modification is found at threonine 664. The segment covering 710 to 726 has biased composition (polar residues); sequence SARQLLPASATSPNQEN. The span at 790-800 shows a compositional bias: low complexity; sequence SNENSNSNSHS. Positions 1003-1015 are enriched in pro residues; sequence SVPPPSMRVPPPN. Residues 1021–1033 are compositionally biased toward basic and acidic residues; it reads PTVRTDPRRDPRR. A compositionally biased stretch (low complexity) spans 1042-1056; sequence GASTANTTAPNASGG. 2 stretches are compositionally biased toward gly residues: residues 1149 to 1170 and 1295 to 1309; these read AALG…GGGV and RGGH…GNGN.

Belongs to the suppressor of sable family. Interacts with Wdr82.

Its subcellular location is the nucleus. The protein resides in the chromosome. Its function is as follows. RNA-binding protein that suppresses transcription of some RNAs. Together with Wdr82, part of a transcription termination checkpoint that promotes transcription termination of RNAs and their subsequent degradation by the nuclear exosome. Promotes transcription termination of aberrant RNAs, transcripts from genes containing a transposon inserted at their very 5' end or RNAs from heat-shock-inducible repetitive element. Binds RNA preferentially at a sequence that resembles a cryptic 5'-splice site. This chain is Protein suppressor of sable, found in Drosophila melanogaster (Fruit fly).